Reading from the N-terminus, the 340-residue chain is Guanine nucleotide-binding protein G(I)/G(S)/G(T) subunit beta-1 (340 aa).

Ser2 is subject to N-acetylserine. Position 2 is a phosphoserine (Ser2). WD repeat units lie at residues 46–94 (RTRR…HAIP), 95–140 (LRSS…RELA), 141–181 (GHTG…TTFT), 182–223 (GHTG…QTFT), 224–267 (GHES…YSHD), 268–309 (NIIC…GVLA), and 310–340 (GHDN…KIWN). His266 bears the Phosphohistidine mark.

This sequence belongs to the WD repeat G protein beta family. As to quaternary structure, g proteins are composed of 3 units, alpha, beta and gamma. The heterodimer formed by GNB1 and GNG2 interacts with ARHGEF5. The heterodimer formed by GNB1 and GNG2 interacts with GRK2. Forms a complex with GNAO1 and GNG3. Interacts with ARHGEF18 and RASD2. Forms complexes with TAS2R14 and G-proteins; these complexes play a role in the perception of bitterness. Component of the TAS2R14-GNAI1 complex, consisting of TAS2R14, GNAI1, GNB1 and GNG2. Component of the TAS2R14-GNAT3 complex, consisting of TAS2R14, GNAT3, GNB1 and GNG2. Component of the TAS2R14-GNAS2 complex, consisting of TAS2R14, GNAS2, GNB1 and GNG2. Phosphorylation at His-266 by NDKB contributes to G protein activation by increasing the high energetic phosphate transfer onto GDP.

Guanine nucleotide-binding proteins (G proteins) are involved as a modulator or transducer in various transmembrane signaling systems. The beta and gamma chains are required for the GTPase activity, for replacement of GDP by GTP, and for G protein-effector interaction. The chain is Guanine nucleotide-binding protein G(I)/G(S)/G(T) subunit beta-1 (GNB1) from Cricetulus griseus (Chinese hamster).